Consider the following 271-residue polypeptide: MAAGPTTAEKSGASGAKRSSKGSSDGPSRPGTRNRKFRMPGTRALLITLGVLLLVAGGLWALYGSTWFRVERVKTSGTSVLTPREVEAAAAVPLGAPLVTVDTDAIEARIRKELPRVDSVDVVRSWPHGIGLKVTERKPVLLIEKGGKFIEVDATGMRFATVDTAPRNVPRLVLDSASSPSLRRFDADRLLQEAVGVRGELPAEIARDTRVVRITSYDSVTLELTRGRTVFWGSGEHGAVKARVLTALLKATPKAGHFDVSAPTAPASSGS.

Positions 1-37 (MAAGPTTAEKSGASGAKRSSKGSSDGPSRPGTRNRKF) are disordered. Topologically, residues 1 to 43 (MAAGPTTAEKSGASGAKRSSKGSSDGPSRPGTRNRKFRMPGTR) are cytoplasmic. Low complexity predominate over residues 8–24 (AEKSGASGAKRSSKGSS). Residues 44–64 (ALLITLGVLLLVAGGLWALYG) traverse the membrane as a helical segment. The Extracellular segment spans residues 65–271 (STWFRVERVK…APTAPASSGS (207 aa)). The region spanning 68-137 (FRVERVKTSG…HGIGLKVTER (70 aa)) is the POTRA domain.

This sequence belongs to the FtsQ/DivIB family. FtsQ subfamily.

It is found in the cell membrane. In terms of biological role, essential cell division protein. The polypeptide is Cell division protein FtsQ (Streptomyces venezuelae (strain ATCC 10712 / CBS 650.69 / DSM 40230 / JCM 4526 / NBRC 13096 / PD 04745)).